Consider the following 506-residue polypeptide: Aluminum-activated malate transporter 7 (506 aa).

A run of 6 helical transmembrane segments spans residues 28–48 (VGLV…YDSF), 52–72 (AMWA…ATLG), 78–98 (VAAT…ASMS), 104–124 (PILL…VRFF), 130–150 (RYDY…VSGF), and 166–186 (VIIG…VWAG). The disordered stretch occupies residues 461–485 (DDGNNDDTSKNDNGSKEVSIHEKHE). Over residues 467–485 (DTSKNDNGSKEVSIHEKHE) the composition is skewed to basic and acidic residues.

It belongs to the aromatic acid exporter (TC 2.A.85) family.

Its subcellular location is the membrane. Its function is as follows. Malate transporter. This chain is Aluminum-activated malate transporter 7 (ALMT7), found in Arabidopsis thaliana (Mouse-ear cress).